A 315-amino-acid chain; its full sequence is MKSGLKIVFAGTPEFAANHLSALIESEHQVIAAYTQPDRPAGRGKKLHASAVKQLAQQHDIPVYQPASLKSEEAQQQLAALNADVMVVVAYGLILPQIILDTPKYGCLNVHGSLLPKWRGAAPIQRAIWAGDAETGVTIMQMDKGLDTGAVLSELRLAITPIDTSATLYTKLAELGPKGLLETLASLGDLTPQAQDNTLATYAEKLSKQEAKIDWTMTAAQLERNVRAFDPWPVAYFEANGAAIKVRSAEVQQTPICDNAKPGQIIQADKHAIGVQTGDGVLLIKTLQLPGKKPLATQDILNGHSDWFSVGTILS.

113–116 (SLLP) is a (6S)-5,6,7,8-tetrahydrofolate binding site.

This sequence belongs to the Fmt family.

It carries out the reaction L-methionyl-tRNA(fMet) + (6R)-10-formyltetrahydrofolate = N-formyl-L-methionyl-tRNA(fMet) + (6S)-5,6,7,8-tetrahydrofolate + H(+). Its function is as follows. Attaches a formyl group to the free amino group of methionyl-tRNA(fMet). The formyl group appears to play a dual role in the initiator identity of N-formylmethionyl-tRNA by promoting its recognition by IF2 and preventing the misappropriation of this tRNA by the elongation apparatus. This chain is Methionyl-tRNA formyltransferase, found in Pseudoalteromonas atlantica (strain T6c / ATCC BAA-1087).